A 767-amino-acid polypeptide reads, in one-letter code: Cilia- and flagella-associated protein 91 (767 aa).

The tract at residues 1 to 29 is disordered; sequence MSHAVTIQEPQAQPQVSQTRYRERSRAGS. A compositionally biased stretch (polar residues) spans 8–19; it reads QEPQAQPQVSQT.

Belongs to the CFAP91 family. Part of a complex containing MYCBP, AKAP1 and PRKAR2B. Interacts with MYCBP and AKAP1. Interacts with CFAP61. Post-translationally, phosphorylated by PKA.

It is found in the cytoplasm. The protein localises to the mitochondrion. It localises to the cytoskeleton. The protein resides in the cilium axoneme. In terms of biological role, involved in sperm flagellum axonemal organization and function. May regulate cilium motility through its role in the assembly of the axonemal radial spokes. In Macaca fascicularis (Crab-eating macaque), this protein is Cilia- and flagella-associated protein 91 (CFAP91).